Reading from the N-terminus, the 143-residue chain is FAD synthase (143 aa).

ATP-binding positions include 9–10 (TF), 14–17 (HPGH), and aspartate 92.

It belongs to the archaeal FAD synthase family. As to quaternary structure, homodimer. It depends on a divalent metal cation as a cofactor.

It carries out the reaction FMN + ATP + H(+) = FAD + diphosphate. It functions in the pathway cofactor biosynthesis; FAD biosynthesis; FAD from FMN: step 1/1. Catalyzes the transfer of the AMP portion of ATP to flavin mononucleotide (FMN) to produce flavin adenine dinucleotide (FAD) coenzyme. In Methanococcoides burtonii (strain DSM 6242 / NBRC 107633 / OCM 468 / ACE-M), this protein is FAD synthase.